Here is an 82-residue protein sequence, read N- to C-terminus: Small ribosomal subunit protein uS17 (82 aa).

The protein belongs to the universal ribosomal protein uS17 family. In terms of assembly, part of the 30S ribosomal subunit.

Functionally, one of the primary rRNA binding proteins, it binds specifically to the 5'-end of 16S ribosomal RNA. This Shewanella piezotolerans (strain WP3 / JCM 13877) protein is Small ribosomal subunit protein uS17.